Here is a 427-residue protein sequence, read N- to C-terminus: Serine--tRNA ligase (427 aa).

231–233 (TAE) provides a ligand contact to L-serine. ATP is bound at residue 262–264 (RSE). Residue Glu-285 participates in L-serine binding. 349–352 (EISS) contributes to the ATP binding site. L-serine is bound at residue Ser-385.

The protein belongs to the class-II aminoacyl-tRNA synthetase family. Type-1 seryl-tRNA synthetase subfamily. In terms of assembly, homodimer. The tRNA molecule binds across the dimer.

It localises to the cytoplasm. The catalysed reaction is tRNA(Ser) + L-serine + ATP = L-seryl-tRNA(Ser) + AMP + diphosphate + H(+). It catalyses the reaction tRNA(Sec) + L-serine + ATP = L-seryl-tRNA(Sec) + AMP + diphosphate + H(+). It participates in aminoacyl-tRNA biosynthesis; selenocysteinyl-tRNA(Sec) biosynthesis; L-seryl-tRNA(Sec) from L-serine and tRNA(Sec): step 1/1. In terms of biological role, catalyzes the attachment of serine to tRNA(Ser). Is also able to aminoacylate tRNA(Sec) with serine, to form the misacylated tRNA L-seryl-tRNA(Sec), which will be further converted into selenocysteinyl-tRNA(Sec). The sequence is that of Serine--tRNA ligase from Rhizobium etli (strain ATCC 51251 / DSM 11541 / JCM 21823 / NBRC 15573 / CFN 42).